The chain runs to 508 residues: Probable ligand-gated ion channel 46 (508 aa).

The signal sequence occupies residues 1–18; it reads MQYLQFLSLVVLLLMCHA. Residues 19-274 are Extracellular-facing; that stretch reads RKSVYRRNSP…FEFKRRAGWY (256 aa). 4 N-linked (GlcNAc...) asparagine glycosylation sites follow: asparagine 65, asparagine 134, asparagine 175, and asparagine 201. A disulfide bond links cysteine 190 and cysteine 204. Residues 275–295 form a helical membrane-spanning segment; it reads ILQAYLPTYLTICISWISFAL. Over 296–301 the chain is Cytoplasmic; sequence GSKAIP. A helical transmembrane segment spans residues 302-321; sequence ARTMLGVNSLLAMTFQFGNI. Topologically, residues 322-335 are extracellular; sequence IRNLPRVSYVKAID. Residues 336–356 traverse the membrane as a helical segment; it reads VWMLSCMTFVFCSLLELAWVG. Over 357 to 480 the chain is Cytoplasmic; that stretch reads YLSREEEPTS…KQRREILAHK (124 aa). Residues 374-407 form a disordered region; the sequence is AQVAPKPCHPPPVQQNANNSSVHRRQKQPKNEEE. A helical transmembrane segment spans residues 481–501; the sequence is IDSVSVFMFPFLFVLFNIAYW. Topologically, residues 502–508 are extracellular; it reads QHYLRGY.

It belongs to the ligand-gated ion channel (TC 1.A.9) family. As to expression, expressed in the nervous system, with high expression in cholinergic motor neurons and weak expression in GABAergic motor neurons.

The protein resides in the presynaptic cell membrane. It localises to the cell projection. It is found in the axon. The protein localises to the cytoplasmic vesicle. Its subcellular location is the secretory vesicle. The protein resides in the synaptic vesicle. In terms of biological role, probable component of a ligand-gated anion channel. Negatively regulates synaptic transmission and synaptic vesicle release in response to acetylcholine in cholinergic motor neurons. Role in synaptic vesicle release kinetics may be in association with the ligand-gated ion channel protein acc-4. The protein is Probable ligand-gated ion channel 46 of Caenorhabditis elegans.